Here is a 226-residue protein sequence, read N- to C-terminus: MLIQIADLFTPAEAAQIRARLEAADWVDGKVTAGYQSAQVKHNRQLSEQHPLAQELGGLILQRLAANNLFMSAALPRKIFPPLFNRYEGGEAFGYHVDNALRPVPGTAERVRTDLSATLFFSEPDSYDGGELVVDDTYGPRTVKLPAGHMVLYPGTSLHKVTPVTRGARISAFFWLQSLVREDSQRSLLLEMDVAIQRLNQDTPGHASIVQLTGVYHNLLRRWTDV.

One can recognise a Fe2OG dioxygenase domain in the interval 78 to 178 (KIFPPLFNRY…RISAFFWLQS (101 aa)). Fe cation contacts are provided by H96, D98, and H159. R169 provides a ligand contact to 2-oxoglutarate.

Fe(2+) is required as a cofactor. It depends on L-ascorbate as a cofactor.

The chain is PKHD-type hydroxylase BP3529 from Bordetella pertussis (strain Tohama I / ATCC BAA-589 / NCTC 13251).